We begin with the raw amino-acid sequence, 362 residues long: Homoisocitrate dehydrogenase (362 aa).

An NADH-binding site is contributed by 79-81; it reads VQS. Serine 81 serves as a coordination point for (2R,3S)-homoisocitrate. Serine 81 and serine 91 each carry phosphoserine. (2R,3S)-homoisocitrate-binding residues include arginine 97, arginine 107, arginine 126, tyrosine 133, lysine 196, and asparagine 198. Asparagine 198 provides a ligand contact to NADH. Mg(2+) is bound by residues aspartate 232, aspartate 256, and aspartate 260. NADH contacts are provided by residues 289–293 and asparagine 301; that span reads GSAPD.

It belongs to the isocitrate and isopropylmalate dehydrogenases family. Mg(2+) serves as cofactor.

The protein localises to the cytoplasm. The enzyme catalyses (2R,3S)-homoisocitrate + NAD(+) = 2-oxoadipate + CO2 + NADH. The protein operates within amino-acid biosynthesis; L-lysine biosynthesis via AAA pathway; L-alpha-aminoadipate from 2-oxoglutarate: step 4/5. The polypeptide is Homoisocitrate dehydrogenase (lys12) (Schizosaccharomyces pombe (strain 972 / ATCC 24843) (Fission yeast)).